The chain runs to 251 residues: Triosephosphate isomerase (251 aa).

9–11 is a substrate binding site; sequence NWK. Catalysis depends on His95, which acts as the Electrophile. Catalysis depends on Glu167, which acts as the Proton acceptor. Residues Gly173, Ser213, and 234-235 each bind substrate; that span reads GG.

It belongs to the triosephosphate isomerase family. In terms of assembly, homodimer.

The protein resides in the cytoplasm. The enzyme catalyses D-glyceraldehyde 3-phosphate = dihydroxyacetone phosphate. The protein operates within carbohydrate biosynthesis; gluconeogenesis. It functions in the pathway carbohydrate degradation; glycolysis; D-glyceraldehyde 3-phosphate from glycerone phosphate: step 1/1. Functionally, involved in the gluconeogenesis. Catalyzes stereospecifically the conversion of dihydroxyacetone phosphate (DHAP) to D-glyceraldehyde-3-phosphate (G3P). The protein is Triosephosphate isomerase of Citrifermentans bemidjiense (strain ATCC BAA-1014 / DSM 16622 / JCM 12645 / Bem) (Geobacter bemidjiensis).